Consider the following 450-residue polypeptide: Chromosomal replication initiator protein DnaA (450 aa).

The segment at 1–84 (MENIHDLWDR…AVKFIIPPNQ (84 aa)) is domain I, interacts with DnaA modulators. Residues 84 to 111 (QDDEELEFQSSKKKQRKPYEETNDFPQS) form a domain II region. Positions 89-108 (LEFQSSKKKQRKPYEETNDF) are disordered. A domain III, AAA+ region region spans residues 112-328 (MLNPKYTFDT…GALIRVVAYS (217 aa)). Residues glycine 156, glycine 158, lysine 159, and threonine 160 each contribute to the ATP site. The segment at 329-450 (SLINKEITAD…QEIQEKLKQL (122 aa)) is domain IV, binds dsDNA.

It belongs to the DnaA family. In terms of assembly, oligomerizes as a right-handed, spiral filament on DNA at oriC.

Its subcellular location is the cytoplasm. Its function is as follows. Plays an essential role in the initiation and regulation of chromosomal replication. ATP-DnaA binds to the origin of replication (oriC) to initiate formation of the DNA replication initiation complex once per cell cycle. Binds the DnaA box (a 9 base pair repeat at the origin) and separates the double-stranded (ds)DNA. Forms a right-handed helical filament on oriC DNA; dsDNA binds to the exterior of the filament while single-stranded (ss)DNA is stabiized in the filament's interior. The ATP-DnaA-oriC complex binds and stabilizes one strand of the AT-rich DNA unwinding element (DUE), permitting loading of DNA polymerase. After initiation quickly degrades to an ADP-DnaA complex that is not apt for DNA replication. Binds acidic phospholipids. In Geobacillus kaustophilus (strain HTA426), this protein is Chromosomal replication initiator protein DnaA.